The chain runs to 324 residues: Mevalonate kinase (324 aa).

Residue 103-113 coordinates ATP; sequence PPRAGLGSSAA. The active-site Proton acceptor is Asp154.

Belongs to the GHMP kinase family. Mevalonate kinase subfamily. Homodimer. The cofactor is Mg(2+).

The protein resides in the cytoplasm. The catalysed reaction is (R)-mevalonate + ATP = (R)-5-phosphomevalonate + ADP + H(+). It functions in the pathway isoprenoid biosynthesis; isopentenyl diphosphate biosynthesis via mevalonate pathway; isopentenyl diphosphate from (R)-mevalonate: step 1/3. Functionally, catalyzes the phosphorylation of (R)-mevalonate (MVA) to (R)-mevalonate 5-phosphate (MVAP). Functions in the mevalonate (MVA) pathway leading to isopentenyl diphosphate (IPP), a key precursor for the biosynthesis of isoprenoid compounds such as archaeal membrane lipids. The sequence is that of Mevalonate kinase from Aeropyrum pernix (strain ATCC 700893 / DSM 11879 / JCM 9820 / NBRC 100138 / K1).